A 305-amino-acid chain; its full sequence is Leucine-rich repeat-containing protein 25 (305 aa).

A signal peptide spans 1-20; the sequence is MGGTLAWTLLLPLLLRESDS. Topologically, residues 21 to 165 are extracellular; that stretch reads LEPSCTVSSA…SCAPGLASAT (145 aa). LRR repeat units lie at residues 39–59, 62–83, and 86–107; these read SATCLNFSGLSLSLPHNQSLR, NVILLDLSGNGLRELPVTFFAH, and KLEVLNVLRNPLSRVDGALAAR. N-linked (GlcNAc...) asparagine glycosylation is found at N44 and N55. 2 N-linked (GlcNAc...) asparagine glycosylation sites follow: N130 and N148. The helical transmembrane segment at 166–186 threads the bilayer; it reads IGAVVVSGCLLLGLAIAGPVL. Residues 187–305 are Cytoplasmic-facing; sequence AWRLWRCRVA…DEEEYVIPGH (119 aa). A disordered region spans residues 204–229; it reads PWAAQDGPKPGLGLQPRYGSRSAPKP. The residue at position 284 (Y284) is a Phosphotyrosine.

Interacts with RIGI. Interacts with SQSTM1. Interacts with p65/RELA; this interaction promotes the degradation of RELA through autophagy. As to expression, expressed in plasmacytoid dendritic cells (PDC), monocyte-derived dendritic cells (MDDC), granulocytes, monocytes, B-lymphocytes, peripheral blood leukocytes, spleen, bone marrow, and, to a lesser extent, lymph nodes, fetal liver, and appendix but not in thymus.

It localises to the membrane. It is found in the cytoplasm. In terms of biological role, plays a role in the inhibition of RLR-mediated type I interferon signaling pathway by targeting RIGI for autophagic degradation. Interacts specifically with ISG15-associated RIGI to promote interaction between RIGI and the autophagic cargo receptor p62/SQSTM1 to mediate RIGI degradation via selective autophagy. Also plays a role in the inhibition of NF-kappa-B signaling pathway and inflammatory response by promoting the degradation of p65/RELA. The sequence is that of Leucine-rich repeat-containing protein 25 (LRRC25) from Homo sapiens (Human).